A 236-amino-acid chain; its full sequence is Glyoxalase 3 (236 aa).

Residues Cys136, His137, and Glu168 contribute to the active site. Cys136 is subject to Cysteine sulfinic acid (-SO2H).

The protein belongs to the peptidase C56 family. HSP31-like subfamily. Monomer.

The catalysed reaction is methylglyoxal + H2O = (R)-lactate + H(+). Functionally, catalyzes the conversion of methylglyoxal (MG) to D-lactate in a single glutathione (GSH)-independent step. Selective for MG, does not use glyoxal as substrate. Plays a role in detoxifying endogenously produced MG, particularly when glycerol is the principal carbon source. Important for viability in stationary phase. The chain is Glyoxalase 3 from Candida albicans (strain SC5314 / ATCC MYA-2876) (Yeast).